The chain runs to 968 residues: MPFTLGQRWISDTESELGLGTVVAVDARTVTLLFPSTGENRLYARSDSPVTRVMFNPGDTITSHDGWQMQVEEVKEENGLLTYIGTRLDTEESGVALREVFLDSKLVFSKPQDRLFAGQIDRMDRFALRYRARKYSSEQFRMPYSGLRGQRTSLIPHQLNIAHDVGRRHAPRVLLADEVGLGKTIEAGMILHQQLLSGAAERVLIIVPETLQHQWLVEMLRRFNLRFALFDDERYAEAQHDAYNPFDTEQLVICSLDFARRSKQRLEHLCEAEWDLLVVDEAHHLVWSEDAPSREYQAIEQLAEHVPGVLLLTATPEQLGMESHFARLRLLDPNRFHDFAQFVEEQKNYRPVADAVAMLLAGNKLSNDELNMLGEMIGEQDIEPLLQAANSDSEDAQSARQELVSMLMDRHGTSRVLFRNTRNGVKGFPKRELHTIKLPLPTQYQTAIKVSGIMGARKSAEDRARDMLYPERIYQEFEGDNATWWNFDPRVEWLMGYLTSHRSQKVLVICAKAATALQLEQVLREREGIRAAVFHEGMSIIERDRAAAWFAEEDTGAQVLLCSEIGSEGRNFQFASHMVMFDLPFNPDLLEQRIGRLDRIGQAHDIQIHVPYLEKTAQSVLVRWYHEGLDAFEHTCPTGRTIYDSVYNDLINYLASPDQTEGFDDLIKSCREQHEALKAQLEQGRDRLLEIHSNGGEKAQALAESIEEQDDDTNLIAFAMNLFDIIGINQDDRGDNMIVLTPSDHMLVPDFPGLSEDGITITFDREVALAREDAQFITWEHPLIRNGLDLILSGDTGSSTISLLKNKALPVGTLLVELIYVVEAQAPKQLQLNRFLPPTPVRMLLDKNGNNLAAQVEFETFNRQLNAVNRHTGSKLVNAVQQDVHAILQLGEAQIEKSARALIDAARNEADEKLSAELSRLEALRAVNPNIRDDELTAIESNRQQVMESLDQAGWRLDALRLIVVTHQ.

One can recognise a Helicase ATP-binding domain in the interval 164–334 (DVGRRHAPRV…FARLRLLDPN (171 aa)). 177 to 184 (DEVGLGKT) contributes to the ATP binding site. The short motif at 280–283 (DEAH) is the DEAH box element. Residues 490–662 (RVEWLMGYLT…YLASPDQTEG (173 aa)) enclose the Helicase C-terminal domain.

Belongs to the SNF2/RAD54 helicase family. RapA subfamily. Interacts with the RNAP. Has a higher affinity for the core RNAP than for the holoenzyme. Its ATPase activity is stimulated by binding to RNAP.

In terms of biological role, transcription regulator that activates transcription by stimulating RNA polymerase (RNAP) recycling in case of stress conditions such as supercoiled DNA or high salt concentrations. Probably acts by releasing the RNAP, when it is trapped or immobilized on tightly supercoiled DNA. Does not activate transcription on linear DNA. Probably not involved in DNA repair. The sequence is that of RNA polymerase-associated protein RapA from Shigella flexneri serotype 5b (strain 8401).